Reading from the N-terminus, the 385-residue chain is 8-amino-7-oxononanoate synthase (385 aa).

Residue Arg-21 coordinates substrate. 108–109 is a pyridoxal 5'-phosphate binding site; that stretch reads GF. His-133 is a binding site for substrate. Pyridoxal 5'-phosphate is bound by residues Ser-179, His-207, and Thr-233. Lys-236 bears the N6-(pyridoxal phosphate)lysine mark. Thr-352 serves as a coordination point for substrate.

It belongs to the class-II pyridoxal-phosphate-dependent aminotransferase family. BioF subfamily. As to quaternary structure, homodimer. It depends on pyridoxal 5'-phosphate as a cofactor.

The catalysed reaction is 6-carboxyhexanoyl-[ACP] + L-alanine + H(+) = (8S)-8-amino-7-oxononanoate + holo-[ACP] + CO2. It participates in cofactor biosynthesis; biotin biosynthesis. In terms of biological role, catalyzes the decarboxylative condensation of pimeloyl-[acyl-carrier protein] and L-alanine to produce 8-amino-7-oxononanoate (AON), [acyl-carrier protein], and carbon dioxide. This Salmonella paratyphi C (strain RKS4594) protein is 8-amino-7-oxononanoate synthase.